We begin with the raw amino-acid sequence, 884 residues long: Receptor-like protein 39 (884 aa).

The signal sequence occupies residues 1–24 (MSELLFRLNFLLLLLLSCVSLASS). The Extracellular segment spans residues 25–847 (FFSFNDPVVG…EEEEQVLNWK (823 aa)). N-linked (GlcNAc...) asparagine glycosylation is found at N59, N71, and N92. LRR repeat units follow at residues 98-122 (FHQL…EFGM), 124-146 (NKLE…SFSN), 147-170 (LSML…VRNL), 171-196 (RKLT…LFEL), 197-223 (HNLA…NLNK), 225-245 (ELLD…ISNL), 246-268 (TQLT…VQNL), 269-292 (TKLS…LFTM), 294-318 (FLSY…SLSS), and 320-344 (LENL…LINL). A glycan (N-linked (GlcNAc...) asparagine) is linked at N146. N-linked (GlcNAc...) asparagine glycosylation is found at N190, N208, N244, and N267. N-linked (GlcNAc...) asparagine glycans are attached at residues N304 and N313. An LRR 11; degenerate repeat occupies 345–365 (KELHLSFLNTSYPINLKLFSS). An N-linked (GlcNAc...) asparagine glycan is attached at N353. LRR repeat units follow at residues 366–391 (LKYL…SYIP), 392–413 (STLE…ILKT), 414–438 (LPNL…LWSL), 440–463 (RLSS…ILVN), and 464–487 (SSVR…PLSV). Residue N403 is glycosylated (N-linked (GlcNAc...) asparagine). A glycan (N-linked (GlcNAc...) asparagine) is linked at N463. An LRR 17; degenerate repeat occupies 488 to 507 (NYFSARNNRYGGDIPLSICS). LRR repeat units follow at residues 508 to 529 (RRSL…PPCP), 530 to 553 (SNFL…YYAD), 554 to 577 (APLR…LLNC), 579 to 601 (ALQF…LKAL), 602 to 625 (PKLQ…NQGS), 628 to 652 (FPEL…FFEN), 702 to 725 (SSSA…IGLL), 726 to 749 (KALI…LANL), 750 to 773 (KKIE…IGTL), and 775 to 798 (FLAY…QITG). N520 is a glycosylation site (N-linked (GlcNAc...) asparagine). N576 is a glycosylation site (N-linked (GlcNAc...) asparagine). N-linked (GlcNAc...) asparagine glycosylation occurs at N732. N780 carries an N-linked (GlcNAc...) asparagine glycan. Residues 848 to 868 (GVGIGYGVGVLLGLAIAQLIA) traverse the membrane as a helical segment. At 869 to 884 (SYKPEWLVFLFQSRNH) the chain is on the cytoplasmic side.

Belongs to the RLP family.

The protein resides in the cell membrane. The sequence is that of Receptor-like protein 39 from Arabidopsis thaliana (Mouse-ear cress).